The chain runs to 335 residues: Methionine import ATP-binding protein MetN 1 (335 aa).

Positions 2-242 (IEFQNVHKTY…PKHPTTRRFV (241 aa)) constitute an ABC transporter domain. 38–45 (GHSGAGKS) lines the ATP pocket.

It belongs to the ABC transporter superfamily. Methionine importer (TC 3.A.1.24) family. The complex is composed of two ATP-binding proteins (MetN), two transmembrane proteins (MetI) and a solute-binding protein (MetQ).

The protein localises to the cell inner membrane. It carries out the reaction L-methionine(out) + ATP + H2O = L-methionine(in) + ADP + phosphate + H(+). It catalyses the reaction D-methionine(out) + ATP + H2O = D-methionine(in) + ADP + phosphate + H(+). Functionally, part of the ABC transporter complex MetNIQ involved in methionine import. Responsible for energy coupling to the transport system. The polypeptide is Methionine import ATP-binding protein MetN 1 (Pseudomonas fluorescens (strain ATCC BAA-477 / NRRL B-23932 / Pf-5)).